The following is a 26-amino-acid chain: uncharacterized protein (26 aa).

The chain crosses the membrane as a helical span at residues Ile3–Leu23.

It is found in the membrane. This is an uncharacterized protein from Helicobacter pylori (strain J99 / ATCC 700824) (Campylobacter pylori J99).